A 646-amino-acid polypeptide reads, in one-letter code: Phosphomethylpyrimidine synthase (646 aa).

Residues 1-13 show a composition bias toward polar residues; that stretch reads MNIRSNPDTTRPA. Residues 1 to 21 are disordered; sequence MNIRSNPDTTRPAVTTGGLPS. Substrate contacts are provided by residues Asn-221, Met-250, Tyr-279, His-315, 335–337, 376–379, and Glu-415; these read SRG and DGLR. His-419 serves as a coordination point for Zn(2+). Tyr-442 is a binding site for substrate. His-483 provides a ligand contact to Zn(2+). Residues Cys-563, Cys-566, and Cys-571 each contribute to the [4Fe-4S] cluster site.

The protein belongs to the ThiC family. Homodimer. The cofactor is [4Fe-4S] cluster.

The catalysed reaction is 5-amino-1-(5-phospho-beta-D-ribosyl)imidazole + S-adenosyl-L-methionine = 4-amino-2-methyl-5-(phosphooxymethyl)pyrimidine + CO + 5'-deoxyadenosine + formate + L-methionine + 3 H(+). It functions in the pathway cofactor biosynthesis; thiamine diphosphate biosynthesis. Functionally, catalyzes the synthesis of the hydroxymethylpyrimidine phosphate (HMP-P) moiety of thiamine from aminoimidazole ribotide (AIR) in a radical S-adenosyl-L-methionine (SAM)-dependent reaction. The chain is Phosphomethylpyrimidine synthase from Rhodopseudomonas palustris (strain HaA2).